The sequence spans 243 residues: CD48 antigen (243 aa).

The signal sequence occupies residues M1 to I26. 2 consecutive Ig-like C2-type domains span residues H29–V127 and P132–S212. Residues N40, N44, N104, N162, and N189 are each glycosylated (N-linked (GlcNAc...) asparagine). The cysteines at positions 154 and 196 are disulfide-linked. S220 carries the GPI-anchor amidated serine lipid modification. Residues F221–T243 constitute a propeptide, removed in mature form.

As to quaternary structure, interacts with CD2. Interacts with CD244; this interaction is possible not only on different cells (trans interaction) but also on the same cell (cis interaction). Interacts with LCK. Widely expressed on all hematopoietic cells.

It is found in the cell membrane. The protein resides in the membrane raft. It localises to the secreted. Glycosylphosphatidylinositol (GPI)-anchored cell surface glycoprotein that interacts via its N-terminal immunoglobulin domain with cell surface receptors including CD244/2B4 or CD2 to regulate immune cell function and activation. Participates in T-cell signaling transduction by associating with CD2 and efficiently bringing the Src family protein kinase LCK and LAT to the TCR/CD3 complex. In turn, promotes LCK phosphorylation and subsequent activation. Induces the phosphorylation of the cytoplasmic immunoreceptortyrosine switch motifs (ITSMs) of CD244 initiating a series of signaling events that leads to the generation of the immunological synapse and the directed release of cytolytic granules containing perforin and granzymes by T-lymphocytes and NK-cells. This chain is CD48 antigen (CD48), found in Homo sapiens (Human).